The following is a 661-amino-acid chain: Fusaric acid cluster transcription factor FUB12 (661 aa).

Positions 17 to 48 (CVPCRTRKIKCNAAVVGLPCGSCVSRECPDEC) form a DNA-binding region, zn(2)-C6 fungal-type. Disordered regions lie at residues 56–132 (RTVK…PPGQ) and 151–184 (SAAQTDASDHQSNDEPDDSFNSQIHHWNPPPQLD). The segment covering 73 to 98 (PDTNGSVLSPRQQQLPTNVSRQATDS) has biased composition (polar residues). Over residues 99-109 (SHSDPVEESIH) the composition is skewed to basic and acidic residues. Residues 110–119 (ASHTGSSLRN) show a composition bias toward polar residues. The segment covering 120-129 (DTPHSRDRRP) has biased composition (basic and acidic residues).

The protein localises to the nucleus. Transcription factor that is involved in the formation of the two Fusaric acid derivatives, dehydrofusaric acid and fusarinolic acid, serving as a detoxification mechanism. The chain is Fusaric acid cluster transcription factor FUB12 from Gibberella moniliformis (strain M3125 / FGSC 7600) (Maize ear and stalk rot fungus).